We begin with the raw amino-acid sequence, 367 residues long: S-adenosylmethionine:tRNA ribosyltransferase-isomerase (367 aa).

Belongs to the QueA family. In terms of assembly, monomer.

The protein resides in the cytoplasm. The catalysed reaction is 7-aminomethyl-7-carbaguanosine(34) in tRNA + S-adenosyl-L-methionine = epoxyqueuosine(34) in tRNA + adenine + L-methionine + 2 H(+). The protein operates within tRNA modification; tRNA-queuosine biosynthesis. Its function is as follows. Transfers and isomerizes the ribose moiety from AdoMet to the 7-aminomethyl group of 7-deazaguanine (preQ1-tRNA) to give epoxyqueuosine (oQ-tRNA). This chain is S-adenosylmethionine:tRNA ribosyltransferase-isomerase, found in Beijerinckia indica subsp. indica (strain ATCC 9039 / DSM 1715 / NCIMB 8712).